An 88-amino-acid polypeptide reads, in one-letter code: Cell division topological specificity factor (88 aa).

The protein belongs to the MinE family.

Prevents the cell division inhibition by proteins MinC and MinD at internal division sites while permitting inhibition at polar sites. This ensures cell division at the proper site by restricting the formation of a division septum at the midpoint of the long axis of the cell. The protein is Cell division topological specificity factor of Cronobacter sakazakii (strain ATCC BAA-894) (Enterobacter sakazakii).